A 195-amino-acid chain; its full sequence is Imidazoleglycerol-phosphate dehydratase (195 aa).

This sequence belongs to the imidazoleglycerol-phosphate dehydratase family.

It is found in the cytoplasm. The catalysed reaction is D-erythro-1-(imidazol-4-yl)glycerol 3-phosphate = 3-(imidazol-4-yl)-2-oxopropyl phosphate + H2O. The protein operates within amino-acid biosynthesis; L-histidine biosynthesis; L-histidine from 5-phospho-alpha-D-ribose 1-diphosphate: step 6/9. This chain is Imidazoleglycerol-phosphate dehydratase, found in Dinoroseobacter shibae (strain DSM 16493 / NCIMB 14021 / DFL 12).